A 98-amino-acid polypeptide reads, in one-letter code: ESAT-6-like protein EsxM (98 aa).

It belongs to the WXG100 family. CFP-10 subfamily.

Its subcellular location is the secreted. Alters the host macrophage cytoskeleton and enhances macrophage motility. Promotes granuloma efflux, extrapulmonary dissemination of infection and bone disease. The chain is ESAT-6-like protein EsxM from Mycobacterium marinum (strain ATCC BAA-535 / M).